The chain runs to 77 residues: Apelin (77 aa).

Residues 1 to 22 (MNLRRCVQALLLLWLCLSAVCG) form the signal peptide. The propeptide occupies 23–41 (GPLLQTSDGKEMEEGTIRY). Residues 43-77 (VQPRGPRSGPGPWQGGRRKFRRQRPRLSHKGPMPF) form a disordered region. Over residues 58 to 71 (GRRKFRRQRPRLSH) the composition is skewed to basic residues. Gln65 bears the Pyrrolidone carboxylic acid mark.

Belongs to the apelin family. Post-translationally, at least 5 active peptides may be produced by proteolytic processing of the peptide precursor.

Its subcellular location is the secreted. The protein resides in the extracellular space. Functionally, peptide hormone that functions as endogenous ligand for the G-protein-coupled apelin receptor (APLNR/APJ), that plays a role in cadiovascular homeostasis. Functions as a balanced agonist activating both G(i) protein pathway and beta-arrestin pathway of APLNR. Downstream G proteins activation, apelin can inhibit cAMP production and activate key intracellular effectors such as ERKs. On the other hand, APLNR activation induces beta-arrestin recruitment to the membrane leading to desensitization and internalization of the receptor. Apelin blunts cardiac hypertrophic induction from APLNR on response to pathological stimuli, but also induces myocardial hypertrophy under normal conditions. Apelin-36 dissociates more hardly than (pyroglu)apelin-13 from APLNR. Involved in the regulation of cardiac precursor cell movements during gastrulation and heart morphogenesis. Has an inhibitory effect on cytokine production in response to T-cell receptor/CD3 cross-linking; the oral intake of apelin in the colostrum and the milk might therefore modulate immune responses in neonates. Plays a role in early coronary blood vessels formation. Mediates myocardial contractility in an ERK1/2-dependent manner. May also have a role in the central control of body fluid homeostasis by influencing vasopressin release and drinking behavior. The sequence is that of Apelin (APLN) from Bos taurus (Bovine).